The chain runs to 705 residues: Pentatricopeptide repeat-containing protein At1g09410, mitochondrial (705 aa).

A mitochondrion-targeting transit peptide spans 1 to 11; that stretch reads MKSQILLRRTY. PPR repeat units lie at residues 16-46, 47-77, 78-112, 113-139, 140-170, 171-205, 206-232, 233-267, 268-294, 295-329, 330-364, 365-395, 396-430, 432-462, and 468-498; these read PPPT…CDSK, SISS…MPDR, NIIS…NVVS, WTAL…MPEK, NKVS…IPDK, DNIA…SVIT, WTTM…MPEK, TEVS…PVIA, CNAM…MKER, NDAS…GVRP, TFPT…QFDV, DVYV…FPSK, DIIM…GSTK, NEVT…MESV, and ITAH…MTVE. Positions 503-578 are type E motif; sequence VWGSLLGACR…SPGCSWTEVE (76 aa). Residues 579–610 are type E(+) motif; that stretch reads NKVHAFTRGGINSHPEQESILKILDELDGLLR. Positions 611–705 are type DYW motif; the sequence is EAGYNPDCSY…NGECSCKDYW (95 aa).

This sequence belongs to the PPR family. PCMP-H subfamily.

The protein resides in the mitochondrion. In Arabidopsis thaliana (Mouse-ear cress), this protein is Pentatricopeptide repeat-containing protein At1g09410, mitochondrial (PCMP-H18).